A 337-amino-acid chain; its full sequence is MDSHIHNDTDDWFNDLDQKSIQVISNKLIPEESNSSDEEISLENINSRSNFIDDNDKIEHIFIEDILKKDVVNLSSNELLQYQCSVAYFIQVLFEGLNDSNELIANKSNFNIKTTSDKMNSMVEYLEWISGVSEILAKRIGQQIYQFIPDRNNTITRSSYNFCPASTQCKKFYSKNENPTCKSHHFVHSLLKYDVDSVIYYLKHNNKNGSFNTDELNNLHLSIKTICFVTRHMAREISYIENITKNNSEQFHRNNPADLTKKKSTNVSGKKSWDSVSTIRTHKATKTFPQNKTRQCSNTKTTTKSTMTPINNGFKESPNQILKIKNGVNRYSILSEY.

Residues 291–314 (NKTRQCSNTKTTTKSTMTPINNGF) are disordered. The span at 299–308 (TKTTTKSTMT) shows a compositional bias: low complexity.

This is an uncharacterized protein from Acanthamoeba polyphaga mimivirus (APMV).